Here is a 209-residue protein sequence, read N- to C-terminus: Octanoyltransferase (209 aa).

The BPL/LPL catalytic domain occupies 28-203; the sequence is NATPETLLLL…RFQGLLDEWL (176 aa). Residues 66 to 73, 133 to 135, and 146 to 148 contribute to the substrate site; these read RGGDVTFH, AIG, and GFA. The Acyl-thioester intermediate role is filled by Cys-164.

This sequence belongs to the LipB family.

Its subcellular location is the cytoplasm. It carries out the reaction octanoyl-[ACP] + L-lysyl-[protein] = N(6)-octanoyl-L-lysyl-[protein] + holo-[ACP] + H(+). It functions in the pathway protein modification; protein lipoylation via endogenous pathway; protein N(6)-(lipoyl)lysine from octanoyl-[acyl-carrier-protein]: step 1/2. In terms of biological role, catalyzes the transfer of endogenously produced octanoic acid from octanoyl-acyl-carrier-protein onto the lipoyl domains of lipoate-dependent enzymes. Lipoyl-ACP can also act as a substrate although octanoyl-ACP is likely to be the physiological substrate. This is Octanoyltransferase from Pelobacter propionicus (strain DSM 2379 / NBRC 103807 / OttBd1).